Reading from the N-terminus, the 494-residue chain is Glutamate--tRNA ligase (494 aa).

The short motif at 10 to 20 (PSPTGDPHVGT) is the 'HIGH' region element. The Zn(2+) site is built by cysteine 107, cysteine 109, cysteine 134, and histidine 136. Residues 251–255 (KLSKR) carry the 'KMSKS' region motif. Position 254 (lysine 254) interacts with ATP.

Belongs to the class-I aminoacyl-tRNA synthetase family. Glutamate--tRNA ligase type 1 subfamily. As to quaternary structure, monomer. The cofactor is Zn(2+).

It is found in the cytoplasm. It carries out the reaction tRNA(Glu) + L-glutamate + ATP = L-glutamyl-tRNA(Glu) + AMP + diphosphate. Catalyzes the attachment of glutamate to tRNA(Glu) in a two-step reaction: glutamate is first activated by ATP to form Glu-AMP and then transferred to the acceptor end of tRNA(Glu). The polypeptide is Glutamate--tRNA ligase (Pseudomonas paraeruginosa (strain DSM 24068 / PA7) (Pseudomonas aeruginosa (strain PA7))).